Reading from the N-terminus, the 144-residue chain is Large ribosomal subunit protein uL15 (144 aa).

Residues 1 to 52 (MRLNTLSPAEGAKHAPKRVGRGIGSGLGKTAGRGHKGQNSRSGGGVRRGFEG) form a disordered region. The segment covering 21-31 (RGIGSGLGKTA) has biased composition (gly residues).

It belongs to the universal ribosomal protein uL15 family. Part of the 50S ribosomal subunit.

Binds to the 23S rRNA. This is Large ribosomal subunit protein uL15 from Yersinia pseudotuberculosis serotype O:1b (strain IP 31758).